Consider the following 584-residue polypeptide: UvrABC system protein C (584 aa).

One can recognise a GIY-YIG domain in the interval 12–89; it reads NKPGCYLFFN…IKKYHPKYNV (78 aa). The UVR domain occupies 194–229; it reads NQVKQTLVKQMQKASDNLQFEQAQRIKDQITSLDFI.

This sequence belongs to the UvrC family. In terms of assembly, interacts with UvrB in an incision complex.

The protein localises to the cytoplasm. Functionally, the UvrABC repair system catalyzes the recognition and processing of DNA lesions. UvrC both incises the 5' and 3' sides of the lesion. The N-terminal half is responsible for the 3' incision and the C-terminal half is responsible for the 5' incision. The polypeptide is UvrABC system protein C (Mycoplasma mycoides subsp. mycoides SC (strain CCUG 32753 / NCTC 10114 / PG1)).